The primary structure comprises 212 residues: MSSTRWLHRQLNDPYVSLAKKQGYRSRATFKLIEMDSKFSIFKKGQYVLDLGSSPGGWSQFAAQRVSHNNNNPVFAVDIQNMDAIPNVIFIQCDIINDIELLSDKFHNKKFDVILSDMAPKACGNKQVDHANIINLCEISLDIVVRFTRENGVFITKILQGEYEKEFYQSMKTYFQSVKYFKPKASRKDSSEMYLVGLGFKKDSQDIKTIES.

Residues G56, W58, D78, D94, and D117 each contribute to the S-adenosyl-L-methionine site. K157 functions as the Proton acceptor in the catalytic mechanism.

The protein belongs to the class I-like SAM-binding methyltransferase superfamily. RNA methyltransferase RlmE family.

Its subcellular location is the cytoplasm. The catalysed reaction is uridine(2552) in 23S rRNA + S-adenosyl-L-methionine = 2'-O-methyluridine(2552) in 23S rRNA + S-adenosyl-L-homocysteine + H(+). Its function is as follows. Specifically methylates the uridine in position 2552 of 23S rRNA at the 2'-O position of the ribose in the fully assembled 50S ribosomal subunit. The sequence is that of Ribosomal RNA large subunit methyltransferase E from Ehrlichia chaffeensis (strain ATCC CRL-10679 / Arkansas).